The chain runs to 246 residues: Orotidine 5'-phosphate decarboxylase (246 aa).

Substrate-binding positions include aspartate 22, lysine 44, 71 to 80, threonine 131, arginine 192, glutamine 201, glycine 221, and arginine 222; that span reads DLKFHDIPNT. Lysine 73 (proton donor) is an active-site residue.

The protein belongs to the OMP decarboxylase family. Type 1 subfamily. As to quaternary structure, homodimer.

It carries out the reaction orotidine 5'-phosphate + H(+) = UMP + CO2. It participates in pyrimidine metabolism; UMP biosynthesis via de novo pathway; UMP from orotate: step 2/2. Functionally, catalyzes the decarboxylation of orotidine 5'-monophosphate (OMP) to uridine 5'-monophosphate (UMP). This is Orotidine 5'-phosphate decarboxylase from Yersinia enterocolitica serotype O:8 / biotype 1B (strain NCTC 13174 / 8081).